An 86-amino-acid chain; its full sequence is Small ribosomal subunit protein bS20 (86 aa).

Residues 1-23 form a disordered region; sequence MANIKSSKKDSIKSRKKKKLNAS.

The protein belongs to the bacterial ribosomal protein bS20 family.

Binds directly to 16S ribosomal RNA. In Buchnera aphidicola subsp. Baizongia pistaciae (strain Bp), this protein is Small ribosomal subunit protein bS20.